Consider the following 1012-residue polypeptide: Translation initiation factor IF-2, chloroplastic (1012 aa).

Residues 75–102 show a composition bias toward low complexity; sequence GNSVSLDSNSNSSSSSKSGGDDGTGFVL. Disordered regions lie at residues 75–132, 147–294, and 319–340; these read GNSV…VEER, EKLG…KEKK, and APPK…RKKG. Positions 152–175 are enriched in polar residues; it reads SKVNGDKNNGSVNKPVRNNANASP. Positions 183-194 are enriched in low complexity; sequence SAASLKSKTLKS. The span at 208 to 231 shows a compositional bias: basic and acidic residues; that stretch reads VVKEVPKPSYNKNEEEKSQTRGGE. Residues 240–257 are compositionally biased toward pro residues; that stretch reads PQPPSKPQPLKPQQPSKP. Basic and acidic residues predominate over residues 277-294; the sequence is VLRDKGAAETSVKSKEKK. The region spanning 488–661 is the tr-type G domain; that stretch reads DRPPVITIMG…MLVAELQELK (174 aa). Residues 497-504 form a G1 region; the sequence is GHVDHGKT. Residue 497–504 participates in GTP binding; the sequence is GHVDHGKT. Positions 522–526 are G2; the sequence is GITQG. Residues 547–550 are G3; sequence DTPG. GTP-binding positions include 547–551 and 601–604; these read DTPGH and NKID. The G4 stretch occupies residues 601–604; that stretch reads NKID. The interval 637-639 is G5; sequence SAL.

The protein belongs to the TRAFAC class translation factor GTPase superfamily. Classic translation factor GTPase family. IF-2 subfamily.

It localises to the plastid. It is found in the chloroplast. Functionally, one of the essential components for the initiation of protein synthesis. Protects formylmethionyl-tRNA from spontaneous hydrolysis and promotes its binding to the 30S ribosomal subunits. Also involved in the hydrolysis of GTP during the formation of the 70S ribosomal complex. This chain is Translation initiation factor IF-2, chloroplastic (IF2CP), found in Phaseolus vulgaris (Kidney bean).